Consider the following 280-residue polypeptide: Four and a half LIM domains protein 1 (280 aa).

N-acetylserine is present on S2. N6-acetyllysine is present on K4. A C4-type zinc finger spans residues 7–31 (CHYCRDPLQGKKYVQKDGRHCCLKC). LIM zinc-binding domains are found at residues 40–92 (CVEC…CNKC), 101–153 (CKGC…CVTC), 162–212 (CVKC…CVDC), and 221–276 (CAGC…CPDC). A Glycyl lysine isopeptide (Lys-Gly) (interchain with G-Cter in SUMO2) cross-link involves residue K86.

Its subcellular location is the cytoplasm. May have an involvement in muscle development or hypertrophy. Isoform 2 binds to RBP-J and plays a negative regulatory role in the RBP-J-mediated transcription in mammalian systems. The sequence is that of Four and a half LIM domains protein 1 (Fhl1) from Rattus norvegicus (Rat).